A 355-amino-acid polypeptide reads, in one-letter code: Mitogen-activated protein kinase (355 aa).

The region spanning 23–311 (YDIQDVVGEG…VEEALKHPYL (289 aa)) is the Protein kinase domain. ATP contacts are provided by residues 29-37 (VGEGAYGVV) and lysine 52. Aspartate 147 acts as the Proton acceptor in catalysis. The residue at position 183 (threonine 183) is a Phosphothreonine. A TXY motif is present at residues 183–185 (TEY). Residue tyrosine 185 is modified to Phosphotyrosine.

It belongs to the protein kinase superfamily. CMGC Ser/Thr protein kinase family. MAP kinase subfamily. Post-translationally, dually phosphorylated on Thr-183 and Tyr-185, which activates the enzyme.

The protein resides in the nucleus. It carries out the reaction L-seryl-[protein] + ATP = O-phospho-L-seryl-[protein] + ADP + H(+). It catalyses the reaction L-threonyl-[protein] + ATP = O-phospho-L-threonyl-[protein] + ADP + H(+). With respect to regulation, activated by tyrosine and threonine phosphorylation. Its function is as follows. Responds to activation by environmental stress by phosphorylating downstream targets. The polypeptide is Mitogen-activated protein kinase (MAPK) (Fusarium vanettenii (Neocosmospora pisi)).